Here is a 529-residue protein sequence, read N- to C-terminus: Extracellular signal-regulated kinase 1 (529 aa).

Disordered regions lie at residues 1-20 (MEPEFDHFQSQMDSDNTHQS) and 100-131 (QQNQQQQSQQMTQQQLQQLMPPPPTSDTSNFN). Over residues 8–20 (FQSQMDSDNTHQS) the composition is skewed to polar residues. Positions 100 to 117 (QQNQQQQSQQMTQQQLQQ) are enriched in low complexity. Residues 149-439 (YSIVKCIGHG…EALAHPYFQS (291 aa)) enclose the Protein kinase domain. ATP contacts are provided by residues 155–163 (IGHGAYGVV) and Lys178. Residue Asp275 is the Proton acceptor of the active site. Thr309 is subject to Phosphothreonine. The TXY motif lies at 309–311 (TEY). A Phosphotyrosine modification is found at Tyr311.

It belongs to the protein kinase superfamily. CMGC Ser/Thr protein kinase family. MAP kinase subfamily. Mg(2+) serves as cofactor. Dually phosphorylated on Thr-309 and Tyr-311, which activates the enzyme.

The enzyme catalyses L-seryl-[protein] + ATP = O-phospho-L-seryl-[protein] + ADP + H(+). It catalyses the reaction L-threonyl-[protein] + ATP = O-phospho-L-threonyl-[protein] + ADP + H(+). With respect to regulation, activated by tyrosine and threonine phosphorylation. Functionally, kinase involved in a signal transduction pathway. The chain is Extracellular signal-regulated kinase 1 (erkA) from Dictyostelium discoideum (Social amoeba).